We begin with the raw amino-acid sequence, 357 residues long: uncharacterized protein (357 aa).

Positions 6-32 (CIVCRQKKIKCDRKNPCTNCEQAGEKC) form a DNA-binding region, zn(2)-C6 fungal-type.

It is found in the nucleus. This is an uncharacterized protein from Schizosaccharomyces pombe (strain 972 / ATCC 24843) (Fission yeast).